A 179-amino-acid polypeptide reads, in one-letter code: Cell division protein SepF (179 aa).

Residues 22–55 (LPYEKRDEPVFTSVNSSQEPALPMNQPSQSAGTK) form a disordered region. Residues 33–55 (TSVNSSQEPALPMNQPSQSAGTK) are compositionally biased toward polar residues.

This sequence belongs to the SepF family. Homodimer. Interacts with FtsZ.

It localises to the cytoplasm. Its function is as follows. Cell division protein that is part of the divisome complex and is recruited early to the Z-ring. Probably stimulates Z-ring formation, perhaps through the cross-linking of FtsZ protofilaments. Its function overlaps with FtsA. This is Cell division protein SepF from Streptococcus pneumoniae (strain Taiwan19F-14).